The sequence spans 268 residues: NH(3)-dependent NAD(+) synthetase (268 aa).

46 to 53 (GVSGGQDS) lines the ATP pocket. Mg(2+) is bound at residue D52. R140 is a deamido-NAD(+) binding site. ATP is bound at residue T160. E165 provides a ligand contact to Mg(2+). Deamido-NAD(+) contacts are provided by K173 and D180. An ATP-binding site is contributed by K189. 260–261 (HK) provides a ligand contact to deamido-NAD(+).

The protein belongs to the NAD synthetase family. As to quaternary structure, homodimer.

It catalyses the reaction deamido-NAD(+) + NH4(+) + ATP = AMP + diphosphate + NAD(+) + H(+). It functions in the pathway cofactor biosynthesis; NAD(+) biosynthesis; NAD(+) from deamido-NAD(+) (ammonia route): step 1/1. In terms of biological role, catalyzes the ATP-dependent amidation of deamido-NAD to form NAD. Uses ammonia as a nitrogen source. This is NH(3)-dependent NAD(+) synthetase from Buchnera aphidicola subsp. Acyrthosiphon pisum (strain APS) (Acyrthosiphon pisum symbiotic bacterium).